Here is a 471-residue protein sequence, read N- to C-terminus: ATP synthase subunit beta (471 aa).

156–163 (GGAGVGKT) serves as a coordination point for ATP.

The protein belongs to the ATPase alpha/beta chains family. F-type ATPases have 2 components, CF(1) - the catalytic core - and CF(0) - the membrane proton channel. CF(1) has five subunits: alpha(3), beta(3), gamma(1), delta(1), epsilon(1). CF(0) has three main subunits: a(1), b(2) and c(9-12). The alpha and beta chains form an alternating ring which encloses part of the gamma chain. CF(1) is attached to CF(0) by a central stalk formed by the gamma and epsilon chains, while a peripheral stalk is formed by the delta and b chains.

The protein localises to the cell membrane. The enzyme catalyses ATP + H2O + 4 H(+)(in) = ADP + phosphate + 5 H(+)(out). In terms of biological role, produces ATP from ADP in the presence of a proton gradient across the membrane. The catalytic sites are hosted primarily by the beta subunits. In Staphylococcus carnosus (strain TM300), this protein is ATP synthase subunit beta.